Here is a 423-residue protein sequence, read N- to C-terminus: UDP-N-acetylglucosamine 1-carboxyvinyltransferase 1 (423 aa).

Residue 23 to 24 (KN) participates in phosphoenolpyruvate binding. Residue R96 participates in UDP-N-acetyl-alpha-D-glucosamine binding. The active-site Proton donor is the C120. The residue at position 120 (C120) is a 2-(S-cysteinyl)pyruvic acid O-phosphothioketal. UDP-N-acetyl-alpha-D-glucosamine is bound by residues 125 to 129 (RPIDL), D309, and V331.

This sequence belongs to the EPSP synthase family. MurA subfamily.

The protein resides in the cytoplasm. It catalyses the reaction phosphoenolpyruvate + UDP-N-acetyl-alpha-D-glucosamine = UDP-N-acetyl-3-O-(1-carboxyvinyl)-alpha-D-glucosamine + phosphate. Its pathway is cell wall biogenesis; peptidoglycan biosynthesis. Cell wall formation. Adds enolpyruvyl to UDP-N-acetylglucosamine. This Streptococcus thermophilus (strain CNRZ 1066) protein is UDP-N-acetylglucosamine 1-carboxyvinyltransferase 1.